Consider the following 422-residue polypeptide: MSHLFSKACQYFPGGVNSPVRACRAVNITPPIVARASKEVFIDSLDKTFIDFCGSWGSLIHGHSHPKICAAIRQGLERGSSYGLTSEQEILFAEEIFSYLGLETNYKIRFMSTGSEATMTAVRLARGITGRPIIIKFLGCYHGHADTFLQEKPFSHTSLDTLDLAHPLTLSLPFNDFPLFQTVMNSLGHKVAGVIFEPVCANMGVILPVPDFIEGVIQTCQQTGSFSIMDEVVTGFRVAQGGAAALYHVKPDILVFGKILGGGLPASAVVAPKDIMDHLAPEGKIFQAGTLSGNPLAMIAGKVSVNLCREQGFYTQLATIEQNFLSPIEHMIRTTGIPVTLVRYGSLFSFFFNPNRPNNLADAQLSDIEAFQKFYQSAFSKGVYLSPSPFEASFLSAAHSMESLDYAQTALIESLEQVFSLV.

Lys258 carries the post-translational modification N6-(pyridoxal phosphate)lysine.

This sequence belongs to the class-III pyridoxal-phosphate-dependent aminotransferase family. HemL subfamily. As to quaternary structure, homodimer. Pyridoxal 5'-phosphate is required as a cofactor.

Its subcellular location is the cytoplasm. The enzyme catalyses (S)-4-amino-5-oxopentanoate = 5-aminolevulinate. It functions in the pathway porphyrin-containing compound metabolism; protoporphyrin-IX biosynthesis; 5-aminolevulinate from L-glutamyl-tRNA(Glu): step 2/2. This chain is Glutamate-1-semialdehyde 2,1-aminomutase, found in Chlamydia trachomatis serovar L2 (strain ATCC VR-902B / DSM 19102 / 434/Bu).